A 334-amino-acid polypeptide reads, in one-letter code: MMDMTPTITTTTTPTPKSPEPESETPTRIQPAKPISFSNGIIKRHHHHHHPLLFTYKECLKNHAAALGGHALDGCGEFMPSPSSISSDPTSLKCAACGCHRNFHRRDPDNNNDSSQIPPPPSTAVEYQPHHRHHPPPPPPPPPPRSPNSASPPPISSSYMLLSLSGTNNNNNNLASFSDLNFSAGNNHHHHHQHTLHGSRKRFRTKFSQFQKEKMHEFAERVGWKMQKRDEDDVRDFCRQIGVDKSVLKVWMHNNKNTFNRRDIAGNEIRQIDNGGGNHTPILAGEINNHNNGHHGVGGGGELHQSVSSGGGGGGFDSDSGGANGGNVNGSSSS.

The segment covering methionine 1–threonine 15 has biased composition (low complexity). 2 disordered regions span residues methionine 1–lysine 33 and phenylalanine 103–leucine 164. A ZF-HD dimerization-type; degenerate zinc finger spans residues tyrosine 56–aspartate 107. Over residues proline 136–isoleucine 155 the composition is skewed to pro residues. The homeobox DNA-binding region spans arginine 200 to aspartate 263. A disordered region spans residues asparagine 292–serine 334. The segment covering serine 309–valine 328 has biased composition (gly residues).

As to quaternary structure, homo- and heterodimer with other ZFHD proteins. Interacts with MIF1, MIF2 and MIF3; these interactions prevent nuclear localization and DNA-binding to inhibit transcription regulation activity. Binds to ZHD1, ZHD2, ZHD4, ZHD5, ZHD6, ZHD7 and ZHD8. Interacts with KIN10 and KIN11. As to expression, mostly expressed in rosettes (e.g. young leaves), flowers (e.g. styles), siliques and inflorescence.

It is found in the nucleus. Its function is as follows. Putative transcription factor. Probably involved in establishing polarity during leaf development through the gibberellic acid (GA) signaling pathway. In Arabidopsis thaliana (Mouse-ear cress), this protein is Zinc-finger homeodomain protein 10 (ZHD10).